Consider the following 115-residue polypeptide: MAPSVPLVLLLVLLLSLAETPASAPAHQGRGGWTLNSAGYLLGPVLHLPQMGDQDRKRETALEILDLWKAIDGLPYSHPLQPSKRNVMEAFAKPEIGDLDVLSKKIPKEEDVLKS.

The signal sequence occupies residues 1–23 (MAPSVPLVLLLVLLLSLAETPAS). Positions 86 to 115 (NVMEAFAKPEIGDLDVLSKKIPKEEDVLKS) are excised as a propeptide.

The protein belongs to the galanin family. In terms of tissue distribution, hypothalamus and pituitary gland.

It is found in the secreted. Functionally, hypothalamic neuropeptide which binds to the G-protein-coupled galanin receptors (GALR1, GALR2 and GALR3). Involved in a large number of putative physiological functions in CNS homeostatic processes, including the regulation of gonadotropin-releasing hormone secretion. In terms of biological role, exhibits potent and dose-dependent vasoconstrictor and anti-edema activity in the cutaneous microvasculature, a physiologic effects which does not appear to be mediated via GALR1 or GALR2. Exhibits antimicrobial activity against Gram-negative bacterias, inducing bacterial membrane blebbing. The polypeptide is Galanin-like peptide (GALP) (Macaca nemestrina (Pig-tailed macaque)).